A 414-amino-acid polypeptide reads, in one-letter code: Isocitrate dehydrogenase [NADP] cytoplasmic (414 aa).

An N-acetylserine modification is found at Ser-2. Residue Tyr-42 is modified to Phosphotyrosine. Residue 75–77 (TIT) participates in NADP(+) binding. Thr-77 lines the substrate pocket. Lys-81 is modified (N6-acetyllysine). An NADP(+)-binding site is contributed by Arg-82. Substrate contacts are provided by residues 94-100 (SPNGTIR) and Arg-109. N6-succinyllysine is present on Lys-126. Arg-132 and Lys-212 together coordinate substrate. N6-acetyllysine is present on residues Lys-224 and Lys-233. Mn(2+) is bound at residue Asp-252. NADP(+) is bound at residue Lys-260. Asp-275 and Asp-279 together coordinate Mn(2+). 310–315 (GTVTRH) contributes to the NADP(+) binding site. Position 321 is an N6-acetyllysine (Lys-321). NADP(+) is bound at residue Asn-328. Ser-389 carries the post-translational modification Phosphoserine. An N6-succinyllysine modification is found at Lys-400.

Belongs to the isocitrate and isopropylmalate dehydrogenases family. In terms of assembly, homodimer. Requires Mg(2+) as cofactor. It depends on Mn(2+) as a cofactor. Acetylation at Lys-374 dramatically reduces catalytic activity.

Its subcellular location is the cytoplasm. It localises to the cytosol. It catalyses the reaction D-threo-isocitrate + NADP(+) = 2-oxoglutarate + CO2 + NADPH. Functionally, catalyzes the NADP(+)-dependent oxidative decarboxylation of isocitrate (D-threo-isocitrate) to 2-ketoglutarate (2-oxoglutarate), which is required by other enzymes such as the phytanoyl-CoA dioxygenase. Plays a critical role in the generation of NADPH, an important cofactor in many biosynthesis pathways. May act as a corneal epithelial crystallin and may be involved in maintaining corneal epithelial transparency. This Ovis aries (Sheep) protein is Isocitrate dehydrogenase [NADP] cytoplasmic (IDH1).